A 349-amino-acid polypeptide reads, in one-letter code: 4-hydroxy-3-methylbut-2-en-1-yl diphosphate synthase (flavodoxin) (349 aa).

Positions 264, 267, 299, and 306 each coordinate [4Fe-4S] cluster.

The protein belongs to the IspG family. Requires [4Fe-4S] cluster as cofactor.

The enzyme catalyses (2E)-4-hydroxy-3-methylbut-2-enyl diphosphate + oxidized [flavodoxin] + H2O + 2 H(+) = 2-C-methyl-D-erythritol 2,4-cyclic diphosphate + reduced [flavodoxin]. Its pathway is isoprenoid biosynthesis; isopentenyl diphosphate biosynthesis via DXP pathway; isopentenyl diphosphate from 1-deoxy-D-xylulose 5-phosphate: step 5/6. In terms of biological role, converts 2C-methyl-D-erythritol 2,4-cyclodiphosphate (ME-2,4cPP) into 1-hydroxy-2-methyl-2-(E)-butenyl 4-diphosphate. The sequence is that of 4-hydroxy-3-methylbut-2-en-1-yl diphosphate synthase (flavodoxin) from Clostridium acetobutylicum (strain ATCC 824 / DSM 792 / JCM 1419 / IAM 19013 / LMG 5710 / NBRC 13948 / NRRL B-527 / VKM B-1787 / 2291 / W).